Here is a 366-residue protein sequence, read N- to C-terminus: Peptide chain release factor 2 (366 aa).

Position 251 is an N5-methylglutamine (glutamine 251).

Belongs to the prokaryotic/mitochondrial release factor family. Methylated by PrmC. Methylation increases the termination efficiency of RF2.

The protein resides in the cytoplasm. Its function is as follows. Peptide chain release factor 2 directs the termination of translation in response to the peptide chain termination codons UGA and UAA. This is Peptide chain release factor 2 (prfB) from Listeria monocytogenes serotype 4b (strain F2365).